We begin with the raw amino-acid sequence, 427 residues long: Serine hydroxymethyltransferase (427 aa).

(6S)-5,6,7,8-tetrahydrofolate is bound by residues leucine 118 and 122-124 (GHL). At lysine 227 the chain carries N6-(pyridoxal phosphate)lysine. (6S)-5,6,7,8-tetrahydrofolate is bound by residues glutamate 243 and 351–353 (SPF).

This sequence belongs to the SHMT family. Homodimer. It depends on pyridoxal 5'-phosphate as a cofactor.

It is found in the cytoplasm. It catalyses the reaction (6R)-5,10-methylene-5,6,7,8-tetrahydrofolate + glycine + H2O = (6S)-5,6,7,8-tetrahydrofolate + L-serine. It participates in one-carbon metabolism; tetrahydrofolate interconversion. The protein operates within amino-acid biosynthesis; glycine biosynthesis; glycine from L-serine: step 1/1. Functionally, catalyzes the reversible interconversion of serine and glycine with tetrahydrofolate (THF) serving as the one-carbon carrier. This reaction serves as the major source of one-carbon groups required for the biosynthesis of purines, thymidylate, methionine, and other important biomolecules. Also exhibits THF-independent aldolase activity toward beta-hydroxyamino acids, producing glycine and aldehydes, via a retro-aldol mechanism. This is Serine hydroxymethyltransferase from Thermotoga maritima (strain ATCC 43589 / DSM 3109 / JCM 10099 / NBRC 100826 / MSB8).